Here is a 96-residue protein sequence, read N- to C-terminus: Co-chaperonin GroES (96 aa).

This sequence belongs to the GroES chaperonin family. As to quaternary structure, heptamer of 7 subunits arranged in a ring. Interacts with the chaperonin GroEL.

The protein resides in the cytoplasm. Its function is as follows. Together with the chaperonin GroEL, plays an essential role in assisting protein folding. The GroEL-GroES system forms a nano-cage that allows encapsulation of the non-native substrate proteins and provides a physical environment optimized to promote and accelerate protein folding. GroES binds to the apical surface of the GroEL ring, thereby capping the opening of the GroEL channel. The protein is Co-chaperonin GroES of Wolbachia pipientis wMel.